The following is a 273-amino-acid chain: Ribosomal RNA small subunit methyltransferase A (273 aa).

Residues Asn-18, Leu-20, Gly-45, Glu-66, Asp-91, and Asn-113 each coordinate S-adenosyl-L-methionine.

This sequence belongs to the class I-like SAM-binding methyltransferase superfamily. rRNA adenine N(6)-methyltransferase family. RsmA subfamily.

The protein resides in the cytoplasm. It carries out the reaction adenosine(1518)/adenosine(1519) in 16S rRNA + 4 S-adenosyl-L-methionine = N(6)-dimethyladenosine(1518)/N(6)-dimethyladenosine(1519) in 16S rRNA + 4 S-adenosyl-L-homocysteine + 4 H(+). Functionally, specifically dimethylates two adjacent adenosines (A1518 and A1519) in the loop of a conserved hairpin near the 3'-end of 16S rRNA in the 30S particle. May play a critical role in biogenesis of 30S subunits. The protein is Ribosomal RNA small subunit methyltransferase A of Enterobacter sp. (strain 638).